A 410-amino-acid chain; its full sequence is Mating-type locus allele B4 protein (410 aa).

A variable domain between B alleles region spans residues 1–110 (MSSDPKISIT…ANASSPVVGC (110 aa)). Residues 107-184 (VVGCRELSED…NARRRSGWSH (78 aa)) constitute a DNA-binding region (homeobox; TALE-type). Positions 111 to 410 (RELSEDLPAY…PFLCLSVAFV (300 aa)) are highly conserved between B alleles. Disordered regions lie at residues 202–241 (RAKL…TPAD), 278–335 (TPKP…TPEL), and 375–394 (RGNR…QPDE). A compositionally biased stretch (low complexity) spans 206-222 (SSSNQSTPPSPTSEYPS). The Nuclear localization signal signature appears at 276–308 (KKTPKPGMPRPVTTVAKRQPARKTKPAAKPKSR). The segment covering 294-307 (QPARKTKPAAKPKS) has biased composition (basic residues). A compositionally biased stretch (polar residues) spans 312–335 (PRASTTPSIDSTLDSSKLESTPEL). The not essential for B4 function stretch occupies residues 333 to 410 (PELSMCSTAD…PFLCLSVAFV (78 aa)). The span at 375–388 (RGNRKVKALPKRAG) shows a compositional bias: basic residues.

It belongs to the TALE/M-ATYP homeobox family.

It localises to the nucleus. The B locus has at least 25 alleles, and any combination of two different B alleles yields a multimeric regulatory protein, that activates genes responsible for the pathogenicity and for the sexual development of the fungus within the corn plant. This Mycosarcoma maydis (Corn smut fungus) protein is Mating-type locus allele B4 protein.